A 472-amino-acid polypeptide reads, in one-letter code: Probable low-salt glycan biosynthesis flippase Agl15 (472 aa).

Helical transmembrane passes span 8–28, 38–58, 77–97, 109–129, 164–184, 209–229, 244–264, 289–309, 315–335, 354–374, 375–395, 408–428, and 434–454; these read IKLF…ITFF, GVFF…DFGL, SSAI…IVVF, FAVY…AVSV, AEAL…WGLS, VVSS…IGIF, VTAI…PQVS, LVIP…GIVF, IASY…VHVI, VISV…FGIV, GAAV…AHYL, IGWC…FKTL, and LIQL…ITLL.

It belongs to the AglR/Agl15 family.

It is found in the cell membrane. The protein operates within protein modification; protein glycosylation. It participates in cell surface structure biogenesis; S-layer biogenesis. In terms of biological role, flippase involved in N-glycan biosynthetic pathway that takes place under low-salt conditions (1.75 M instead of 3.4 M). Participates in the formation of the tetrasaccharide present at 'Asn-532' of S-layer glycoprotein Csg, consisting of a sulfated hexose, 2 hexoses and rhamnose. Probably moves the tetrasaccharide from the cytosolic to the extracytosolic side of the membrane. This is Probable low-salt glycan biosynthesis flippase Agl15 (agl15) from Haloferax volcanii (strain ATCC 29605 / DSM 3757 / JCM 8879 / NBRC 14742 / NCIMB 2012 / VKM B-1768 / DS2) (Halobacterium volcanii).